Reading from the N-terminus, the 639-residue chain is Chaperone protein DnaK 1 (639 aa).

Position 199 is a phosphothreonine; by autocatalysis (Thr199). Residues 603–612 (QQQAQAQQAP) are compositionally biased toward low complexity. Residues 603–639 (QQQAQAQQAPGGEGEQEAKQDDNVVDAEFEEVKDEKK) are disordered. Positions 625–639 (NVVDAEFEEVKDEKK) are enriched in acidic residues.

This sequence belongs to the heat shock protein 70 family.

Functionally, acts as a chaperone. The protein is Chaperone protein DnaK 1 of Photobacterium profundum (strain SS9).